A 223-amino-acid polypeptide reads, in one-letter code: Deoxyribose-phosphate aldolase (223 aa).

Residue aspartate 92 is the Proton donor/acceptor of the active site. Lysine 154 functions as the Schiff-base intermediate with acetaldehyde in the catalytic mechanism. Lysine 182 (proton donor/acceptor) is an active-site residue.

It belongs to the DeoC/FbaB aldolase family. DeoC type 1 subfamily.

The protein localises to the cytoplasm. The catalysed reaction is 2-deoxy-D-ribose 5-phosphate = D-glyceraldehyde 3-phosphate + acetaldehyde. The protein operates within carbohydrate degradation; 2-deoxy-D-ribose 1-phosphate degradation; D-glyceraldehyde 3-phosphate and acetaldehyde from 2-deoxy-alpha-D-ribose 1-phosphate: step 2/2. Catalyzes a reversible aldol reaction between acetaldehyde and D-glyceraldehyde 3-phosphate to generate 2-deoxy-D-ribose 5-phosphate. The polypeptide is Deoxyribose-phosphate aldolase (Haemophilus influenzae (strain PittEE)).